A 179-amino-acid polypeptide reads, in one-letter code: Large ribosomal subunit protein uL6 (179 aa).

This sequence belongs to the universal ribosomal protein uL6 family. As to quaternary structure, part of the 50S ribosomal subunit.

Its function is as follows. This protein binds to the 23S rRNA, and is important in its secondary structure. It is located near the subunit interface in the base of the L7/L12 stalk, and near the tRNA binding site of the peptidyltransferase center. This Akkermansia muciniphila (strain ATCC BAA-835 / DSM 22959 / JCM 33894 / BCRC 81048 / CCUG 64013 / CIP 107961 / Muc) protein is Large ribosomal subunit protein uL6.